A 360-amino-acid polypeptide reads, in one-letter code: Peptide chain release factor 1 (360 aa).

The residue at position 237 (glutamine 237) is an N5-methylglutamine.

The protein belongs to the prokaryotic/mitochondrial release factor family. Methylated by PrmC. Methylation increases the termination efficiency of RF1.

It is found in the cytoplasm. Peptide chain release factor 1 directs the termination of translation in response to the peptide chain termination codons UAG and UAA. The sequence is that of Peptide chain release factor 1 from Pseudomonas entomophila (strain L48).